A 488-amino-acid polypeptide reads, in one-letter code: Secreted triacylglycerol lipase LIP1 (488 aa).

The first 26 residues, 1 to 26 (MPSMLSLFYLAQSLFLLLLFPLYGHA), serve as a signal peptide directing secretion. Residues Cys-119 and Cys-288 are joined by a disulfide bond. A glycan (N-linked (GlcNAc...) asparagine) is linked at Asn-183. The active-site Nucleophile is Ser-201. N-linked (GlcNAc...) asparagine glycosylation is present at Asn-316. Catalysis depends on residues Asp-348 and His-382. Residues 461 to 488 (SKSGSSLKSHSHSQTHKHRKDVSTISNA) form a disordered region. Residues 469–480 (SHSHSQTHKHRK) show a composition bias toward basic residues.

This sequence belongs to the AB hydrolase superfamily. Lipase family. Class Lip subfamily.

The protein resides in the secreted. The enzyme catalyses a triacylglycerol + H2O = a diacylglycerol + a fatty acid + H(+). It catalyses the reaction a monoacylglycerol + H2O = glycerol + a fatty acid + H(+). The catalysed reaction is a diacylglycerol + H2O = a monoacylglycerol + a fatty acid + H(+). Its activity is regulated as follows. Inhibited by different metal ions including Fe(2+), Fe(3+), Cu(2+), and Zn(2+). The monovalent ions Na(+) and K(+) exhibit less dramatic inhibition. Its function is as follows. Secreted lipase that releases free fatty acids from monoacylglycerol and triacylglycerol but has no phospholipase or lysophospholipase activities. Has minor esterase activity. Due to an absence of fatty acid synthase genes in Malassezia species, secretory lipases are essential for the yeast to generate free fatty acids from degradation of sebum and assimilate them as lipid sources for growth. Plays important roles not only in lipid metabolism but also in the immune response of host cells and pathogenesis. Hydrolyzes lipids, such as Tween 20, 40 and 80, with Tween 80 being the best substrate. The sequence is that of Secreted triacylglycerol lipase LIP1 from Malassezia furfur (Pityriasis versicolor infection agent).